Consider the following 281-residue polypeptide: Arylamine N-acetyltransferase / N-hydroxyarylamine O-acetyltransferase (281 aa).

The active-site Acyl-thioester intermediate is the Cys-69. Catalysis depends on residues His-107 and Asp-122.

This sequence belongs to the arylamine N-acetyltransferase family. In terms of assembly, monomer and homodimer.

The protein resides in the cytoplasm. It carries out the reaction an arylamine + acetyl-CoA = an N-acetylarylamine + CoA. The enzyme catalyses an N-hydroxyarylamine + acetyl-CoA = an N-acetoxyarylamine + CoA. Its activity is regulated as follows. Inhibited by N-ethylmaleimide and iodoacetamide. In terms of biological role, catalyzes both the acetyl-CoA-dependent N-acetylation of aromatic amines and the O-acetylation of N-hydroxyarylamines. In vitro, catalyzes the O-acetylation of N-hydroxy-Glu-P-1, and the N-acetylation of isoniazid and 2-aminofluorene. The polypeptide is Arylamine N-acetyltransferase / N-hydroxyarylamine O-acetyltransferase (nhoA) (Salmonella typhimurium (strain LT2 / SGSC1412 / ATCC 700720)).